Reading from the N-terminus, the 608-residue chain is Histone-arginine methyltransferase CARM1 (608 aa).

Ala-2 is modified (N-acetylalanine). Residues 27 to 138 (ATVSVFPGAR…GHTLERSVFS (112 aa)) are interaction with C9orf72. The region spanning 146–453 (AVQYFQFYGY…KRQSYDISIV (308 aa)) is the SAM-dependent MTase PRMT-type domain. 4 residues coordinate S-adenosyl-L-methionine: Gln-159, Arg-168, Gly-192, and Glu-214. The residue at position 216 (Ser-216) is a Phosphoserine. Residue Lys-227 forms a Glycyl lysine isopeptide (Lys-Gly) (interchain with G-Cter in ubiquitin) linkage. Positions 243 and 271 each coordinate S-adenosyl-L-methionine. A required for nuclear translocation region spans residues 346–379 (RILMAKSVKYTVNFLEAKEGDLHRIEIPFKFHML). Positions 499-608 (TGSTYNLSSG…IPTNTMHYGS (110 aa)) are transactivation domain. Residue Arg-550 is modified to Dimethylated arginine.

This sequence belongs to the class I-like SAM-binding methyltransferase superfamily. Protein arginine N-methyltransferase family. Homodimer. Interacts with NR1H4. Interacts with SNRPC. Interacts with the C-terminus of NCOA2/GRIP1, NCO3/ACTR and NCOA1/SRC1. Part of a complex consisting of CARM1, EP300/P300 and NCOA2/GRIP1. Interacts with FLII, TP53, myogenic factor MEF2, EP300/P300, TRIM24, CREBBP and CTNNB1. Interacts with RELA. Identified in a complex containing CARM1, TRIM24 and NCOA2/GRIP1. Interacts with NCOA3/SRC3. Interacts with SKP2. Interacts (via PH domain-like fold) with C9orf72. Interacts with PARP1; promoting PARP1 recruimtent to replication forks. As to quaternary structure, (Microbial infection) Interacts with HTLV-1 protein Tax. In terms of processing, auto-methylated on Arg-550. Methylation enhances transcription coactivator activity. Methylation is required for its role in the regulation of pre-mRNA alternative splicing. Phosphorylation at Ser-216 is strongly increased during mitosis, and decreases rapidly to a very low, basal level after entry into the G1 phase of the cell cycle. Phosphorylation at Ser-216 may promote location in the cytosol. Phosphorylation at Ser-216 interferes with S-adenosyl-L-methionine binding and strongly reduces methyltransferase activity. Post-translationally, ubiquitinated by E3 ubiquitin-protein ligase complex containing FBXO9 at Lys-227; leading to proteasomal degradation. In terms of tissue distribution, overexpressed in prostate adenocarcinomas and high-grade prostatic intraepithelial neoplasia.

It is found in the nucleus. Its subcellular location is the cytoplasm. It localises to the chromosome. The enzyme catalyses L-arginyl-[protein] + 2 S-adenosyl-L-methionine = N(omega),N(omega)-dimethyl-L-arginyl-[protein] + 2 S-adenosyl-L-homocysteine + 2 H(+). Its activity is regulated as follows. Methylation of H3R17 (H3R17me) by CARM1 is stimulated by preacetylation of H3 'Lys-18' (H3K18ac) H3 'Lys-23' (H3K23ac) by EP300 and blocked by citrullination of H3 'Arg-17' (H3R17ci) by PADI4. Methylates (mono- and asymmetric dimethylation) the guanidino nitrogens of arginyl residues in several proteins involved in DNA packaging, transcription regulation, pre-mRNA splicing, and mRNA stability. Recruited to promoters upon gene activation together with histone acetyltransferases from EP300/P300 and p160 families, methylates histone H3 at 'Arg-17' (H3R17me), forming mainly asymmetric dimethylarginine (H3R17me2a), leading to activation of transcription via chromatin remodeling. During nuclear hormone receptor activation and TCF7L2/TCF4 activation, acts synergically with EP300/P300 and either one of the p160 histone acetyltransferases NCOA1/SRC1, NCOA2/GRIP1 and NCOA3/ACTR or CTNNB1/beta-catenin to activate transcription. During myogenic transcriptional activation, acts together with NCOA3/ACTR as a coactivator for MEF2C. During monocyte inflammatory stimulation, acts together with EP300/P300 as a coactivator for NF-kappa-B. Acts as a coactivator for PPARG, promotes adipocyte differentiation and the accumulation of brown fat tissue. Plays a role in the regulation of pre-mRNA alternative splicing by methylation of splicing factors. Also seems to be involved in p53/TP53 transcriptional activation. Methylates EP300/P300, both at 'Arg-2142', which may loosen its interaction with NCOA2/GRIP1, and at 'Arg-580' and 'Arg-604' in the KIX domain, which impairs its interaction with CREB and inhibits CREB-dependent transcriptional activation. Also methylates arginine residues in RNA-binding proteins PABPC1, ELAVL1 and ELAV4, which may affect their mRNA-stabilizing properties and the half-life of their target mRNAs. Acts as a transcriptional coactivator of ACACA/acetyl-CoA carboxylase by enriching H3R17 methylation at its promoter, thereby positively regulating fatty acid synthesis. Independently of its methyltransferase activity, involved in replication fork progression: promotes PARP1 recruitment to replication forks, leading to poly-ADP-ribosylation of chromatin at replication forks and reduced fork speed. This is Histone-arginine methyltransferase CARM1 (CARM1) from Homo sapiens (Human).